A 344-amino-acid chain; its full sequence is Phosphoribosylformylglycinamidine cyclo-ligase (344 aa).

This sequence belongs to the AIR synthase family.

Its subcellular location is the cytoplasm. It catalyses the reaction 2-formamido-N(1)-(5-O-phospho-beta-D-ribosyl)acetamidine + ATP = 5-amino-1-(5-phospho-beta-D-ribosyl)imidazole + ADP + phosphate + H(+). The protein operates within purine metabolism; IMP biosynthesis via de novo pathway; 5-amino-1-(5-phospho-D-ribosyl)imidazole from N(2)-formyl-N(1)-(5-phospho-D-ribosyl)glycinamide: step 2/2. This is Phosphoribosylformylglycinamidine cyclo-ligase from Neisseria gonorrhoeae (strain ATCC 700825 / FA 1090).